Reading from the N-terminus, the 361-residue chain is Chorismate synthase (361 aa).

Residues arginine 48 and arginine 54 each coordinate NADP(+). Residues 125-127 (RSS), 238-239 (NA), glycine 278, 293-297 (KPTSS), and arginine 319 contribute to the FMN site.

It belongs to the chorismate synthase family. As to quaternary structure, homotetramer. Requires FMNH2 as cofactor.

The enzyme catalyses 5-O-(1-carboxyvinyl)-3-phosphoshikimate = chorismate + phosphate. Its pathway is metabolic intermediate biosynthesis; chorismate biosynthesis; chorismate from D-erythrose 4-phosphate and phosphoenolpyruvate: step 7/7. Its function is as follows. Catalyzes the anti-1,4-elimination of the C-3 phosphate and the C-6 proR hydrogen from 5-enolpyruvylshikimate-3-phosphate (EPSP) to yield chorismate, which is the branch point compound that serves as the starting substrate for the three terminal pathways of aromatic amino acid biosynthesis. This reaction introduces a second double bond into the aromatic ring system. In Cronobacter sakazakii (strain ATCC BAA-894) (Enterobacter sakazakii), this protein is Chorismate synthase.